A 72-amino-acid polypeptide reads, in one-letter code: DNA-directed RNA polymerase subunit omega (72 aa).

This sequence belongs to the RNA polymerase subunit omega family. As to quaternary structure, the RNAP catalytic core consists of 2 alpha, 1 beta, 1 beta' and 1 omega subunit. When a sigma factor is associated with the core the holoenzyme is formed, which can initiate transcription.

The catalysed reaction is RNA(n) + a ribonucleoside 5'-triphosphate = RNA(n+1) + diphosphate. Functionally, promotes RNA polymerase assembly. Latches the N- and C-terminal regions of the beta' subunit thereby facilitating its interaction with the beta and alpha subunits. In Francisella philomiragia subsp. philomiragia (strain ATCC 25017 / CCUG 19701 / FSC 153 / O#319-036), this protein is DNA-directed RNA polymerase subunit omega.